A 495-amino-acid polypeptide reads, in one-letter code: Sulfhydryl oxidase 2 (495 aa).

The first 15 residues, 1-15, serve as a signal peptide directing secretion; it reads MSLVHLLLFAGLVIA. The Thioredoxin domain maps to 29 to 164; that stretch reads EISDQKDKAV…LLNWINKQIG (136 aa). A glycan (N-linked (GlcNAc...) asparagine) is linked at N41. Residues C66 and C69 each act as nucleophile in the active site. Residues C66 and C69 are joined by a disulfide bond. 4 N-linked (GlcNAc...) asparagine glycosylation sites follow: N182, N257, N266, and N292. A disulfide bridge links C287 with C299. Residues 290 to 392 enclose the ERV/ALR sulfhydryl oxidase domain; the sequence is SKNDTRGFSC…GDPKFPKIIW (103 aa). FAD is bound by residues R295, W302, H306, E336, H340, 363–370, K389, and W392; that span reads WSTHNKVN. Residues C334 and C337 are joined by a disulfide bond. A disulfide bond links C398 and C401.

FAD is required as a cofactor.

It localises to the secreted. It carries out the reaction 2 R'C(R)SH + O2 = R'C(R)S-S(R)CR' + H2O2. Its function is as follows. Catalyzes the oxidation of sulfhydryl groups in peptide and protein thiols to disulfides with the reduction of oxygen to hydrogen peroxide. May contribute to disulfide bond formation in a variety of secreted proteins. This Arabidopsis thaliana (Mouse-ear cress) protein is Sulfhydryl oxidase 2 (QSOX2).